We begin with the raw amino-acid sequence, 387 residues long: Diphthine methyltransferase (387 aa).

WD repeat units lie at residues 62-102 (NTYG…KDDF), 119-159 (EKDV…VQFT), 195-237 (PHEL…FIWS), 241-286 (IHDA…ESIF), and 357-387 (GHDS…TWIV).

It belongs to the DPH7 family. Interacts with CAN1 and RTT10.

Its subcellular location is the cytoplasm. The protein localises to the endosome. It catalyses the reaction diphthine methyl ester-[translation elongation factor 2] + H2O = diphthine-[translation elongation factor 2] + methanol + H(+). It participates in protein modification; peptidyl-diphthamide biosynthesis. In terms of biological role, catalyzes the demethylation of diphthine methyl ester to form diphthine, an intermediate in diphthamide biosynthesis, a post-translational modification of histidine which occurs in translation elongation factor 2 (EFT1 and EFT2). Also plays a role in the regulation of the retromer complex and is required for the recycling from endosomes of plasma membrane proteins like CAN1 and MUP1. Identified in a screen for mutants with decreased levels of rDNA transcription. The polypeptide is Diphthine methyltransferase (RRT2) (Saccharomyces cerevisiae (strain ATCC 204508 / S288c) (Baker's yeast)).